We begin with the raw amino-acid sequence, 474 residues long: Aspartyl/glutamyl-tRNA(Asn/Gln) amidotransferase subunit B (474 aa).

Belongs to the GatB/GatE family. GatB subfamily. As to quaternary structure, heterotrimer of A, B and C subunits.

The enzyme catalyses L-glutamyl-tRNA(Gln) + L-glutamine + ATP + H2O = L-glutaminyl-tRNA(Gln) + L-glutamate + ADP + phosphate + H(+). It catalyses the reaction L-aspartyl-tRNA(Asn) + L-glutamine + ATP + H2O = L-asparaginyl-tRNA(Asn) + L-glutamate + ADP + phosphate + 2 H(+). Allows the formation of correctly charged Asn-tRNA(Asn) or Gln-tRNA(Gln) through the transamidation of misacylated Asp-tRNA(Asn) or Glu-tRNA(Gln) in organisms which lack either or both of asparaginyl-tRNA or glutaminyl-tRNA synthetases. The reaction takes place in the presence of glutamine and ATP through an activated phospho-Asp-tRNA(Asn) or phospho-Glu-tRNA(Gln). The protein is Aspartyl/glutamyl-tRNA(Asn/Gln) amidotransferase subunit B of Limosilactobacillus fermentum (strain NBRC 3956 / LMG 18251) (Lactobacillus fermentum).